A 745-amino-acid chain; its full sequence is Myeloperoxidase (745 aa).

Residues 1-48 (MGVPFFSSLRCMVDLGPCWAGGLTAEMKLLLALAGLLAILATPQPSEG) form the signal peptide. N-linked (GlcNAc...) asparagine glycosylation is present at asparagine 139. Cysteine 167 and cysteine 180 are oxidised to a cystine. Heme b is bound at residue aspartate 260. Residue histidine 261 is the Proton acceptor of the active site. Aspartate 262 is a Ca(2+) binding site. 2 disulfide bridges follow: cysteine 281-cysteine 291 and cysteine 285-cysteine 309. Cysteine 316 carries the cysteine sulfenic acid (-SOH) modification. Residue asparagine 323 is glycosylated (N-linked (GlcNAc...) asparagine). The Ca(2+) site is built by threonine 334, phenylalanine 336, aspartate 338, and serine 340. Residues asparagine 355 and asparagine 391 are each glycosylated (N-linked (GlcNAc...) asparagine). A disulfide bridge connects residues cysteine 387 and cysteine 398. The heme b site is built by glutamate 408 and methionine 409. Asparagine 483 carries an N-linked (GlcNAc...) asparagine glycan. Histidine 502 serves as a coordination point for heme b. 2 cysteine pairs are disulfide-bonded: cysteine 606-cysteine 663 and cysteine 704-cysteine 730. N-linked (GlcNAc...) asparagine glycosylation occurs at asparagine 729.

Belongs to the peroxidase family. XPO subfamily. Homodimer; disulfide-linked. Each monomer consists of a light and a heavy chain. Found in a complex with CP and LTF; interacts directly with CP, which protects CP antioxidant properties by MPO. The cofactor is Ca(2+). Heme b is required as a cofactor.

It is found in the lysosome. The catalysed reaction is chloride + H2O2 + H(+) = hypochlorous acid + H2O. Its function is as follows. Part of the host defense system of polymorphonuclear leukocytes. It is responsible for microbicidal activity against a wide range of organisms. In the stimulated PMN, MPO catalyzes the production of hypohalous acids, primarily hypochlorous acid in physiologic situations, and other toxic intermediates that greatly enhance PMN microbicidal activity. Mediates the proteolytic cleavage of alpha-1-microglobulin to form t-alpha-1-microglobulin, which potently inhibits oxidation of low-density lipoprotein particles and limits vascular damage. This Homo sapiens (Human) protein is Myeloperoxidase.